The chain runs to 491 residues: Large ribosomal subunit protein mL101 (rPPR4) (491 aa).

PPR repeat units follow at residues 122 to 156 (TELT…NITP), 157 to 191 (SSMS…NVMP), 192 to 226 (DSYT…GRVA), 228 to 262 (DWTT…NTQR), 263 to 293 (DFTA…LRLA), 298 to 328 (SNVA…WQAN), 333 to 367 (DIRI…GGKL), and 368 to 402 (NAKT…GKGD).

It belongs to the PPR family. P subfamily. As to quaternary structure, component of the mitochondrial ribosome large subunit.

It is found in the mitochondrion. This is Large ribosomal subunit protein mL101 (rPPR4) from Arabidopsis thaliana (Mouse-ear cress).